Consider the following 332-residue polypeptide: Homoserine kinase (332 aa).

Belongs to the pseudomonas-type ThrB family.

The enzyme catalyses L-homoserine + ATP = O-phospho-L-homoserine + ADP + H(+). It participates in amino-acid biosynthesis; L-threonine biosynthesis; L-threonine from L-aspartate: step 4/5. The protein is Homoserine kinase of Burkholderia multivorans (strain ATCC 17616 / 249).